We begin with the raw amino-acid sequence, 389 residues long: Smad nuclear interacting protein 1 (389 aa).

Positions 1 to 10 are enriched in basic and acidic residues; the sequence is MKAGKSERER. Residues 1 to 212 form a disordered region; it reads MKAGKSERER…GNKNKEVPVK (212 aa). The residue at position 18 (Ser-18) is a Phosphoserine. Residue Lys-28 forms a Glycyl lysine isopeptide (Lys-Gly) (interchain with G-Cter in SUMO); alternate linkage. Lys-28 is covalently cross-linked (Glycyl lysine isopeptide (Lys-Gly) (interchain with G-Cter in SUMO1); alternate). Residue Lys-28 forms a Glycyl lysine isopeptide (Lys-Gly) (interchain with G-Cter in SUMO2); alternate linkage. A compositionally biased stretch (basic and acidic residues) spans 28-43; that stretch reads KQERLSPEPVAHRRPD. Phosphoserine occurs at positions 33 and 48. Positions 54-72 are enriched in low complexity; that stretch reads AESGSAGHRGSRARGASRS. Positions 73–95 are enriched in basic residues; the sequence is PAKKKSKSSGRRSKSPRTKRSRS. Ser-95 is modified (phosphoserine). Basic and acidic residues-rich tracts occupy residues 103-138 and 147-163; these read VKQEREDHPRRGREDRQHRELSEQEHRRARNSERDR and RSSDERPVSGQGRDRDS. A Glycyl lysine isopeptide (Lys-Gly) (interchain with G-Cter in SUMO2) cross-link involves residue Lys-104. A Phosphoserine modification is found at Ser-149. Residues 166–197 are a coiled coil; that stretch reads LQAQEEERDFNNARRREHRQQNESAGAEAQEV. A Glycyl lysine isopeptide (Lys-Gly) (interchain with G-Cter in SUMO2) cross-link involves residue Lys-214. The region spanning 272 to 335 is the FHA domain; it reads YLLGRHRRIA…NGTFLNNKRI (64 aa). Residues 363-373 are compositionally biased toward basic and acidic residues; it reads ESSDTSELDRK. The interval 363 to 389 is disordered; sequence ESSDTSELDRKEDEDEEEEEEMVSDSS. A compositionally biased stretch (acidic residues) spans 374–389; the sequence is EDEDEEEEEEMVSDSS. Phosphoserine is present on Ser-386.

In terms of assembly, component of activated spliceosome complexes. Component of the minor spliceosome, which splices U12-type introns. Binds SMAD4 and CREBBP/EP300. Binds the SMAD1/OAZ1/PSMB4 complex. Interacts with DROSHA and SMARCA4. Component of the SNARP complex which consists at least of SNIP1, SNW1, THRAP3, BCLAF1 and PNN. In terms of processing, degraded by the proteasome upon binding to the SMAD1/OAZ1/PSMB4 complex.

It is found in the nucleus. Functionally, required for pre-mRNA splicing as component of the spliceosome. As a component of the minor spliceosome, involved in the splicing of U12-type introns in pre-mRNAs. Down-regulates NF-kappa-B signaling by competing with RELA for CREBBP/EP300 binding. Involved in the microRNA (miRNA) biogenesis. May be involved in cyclin-D1/CCND1 mRNA stability through the SNARP complex which associates with both the 3'end of the CCND1 gene and its mRNA. This Rattus norvegicus (Rat) protein is Smad nuclear interacting protein 1 (Snip1).